The following is a 102-amino-acid chain: Gonadotropin subunit beta-1 (102 aa).

5 disulfides stabilise this stretch: Cys-8/Cys-51, Cys-20/Cys-65, Cys-31/Cys-77, Cys-35/Cys-79, and Cys-82/Cys-89. Asn-12 is a glycosylation site (N-linked (GlcNAc...) asparagine).

Belongs to the glycoprotein hormones subunit beta family. In terms of assembly, heterodimer of an alpha and a beta chain.

The protein localises to the secreted. Involved in gametogenesis and steroidogenesis. The polypeptide is Gonadotropin subunit beta-1 (cgba) (Thunnus obesus (Bigeye tuna)).